A 172-amino-acid polypeptide reads, in one-letter code: RNA silencing suppressor p19 (172 aa).

The segment covering 1–20 has biased composition (basic and acidic residues); it reads MERAIQGNDAREQANSERWD. The segment at 1 to 37 is disordered; the sequence is MERAIQGNDAREQANSERWDGGSGGTTSPFKLPDESP.

It belongs to the tombusvirus protein p19 family. In terms of assembly, homodimer.

Its function is as follows. Viral suppressor of RNA silencing which binds specifically to silencing RNAs (siRNAs). Acts as a molecular caliper to specifically select siRNAs based on the length of the duplex region of the RNA. The polypeptide is RNA silencing suppressor p19 (Tomato bushy stunt virus (strain Ja6) (TBSV)).